The sequence spans 368 residues: Zinc finger protein 24 (368 aa).

Lys22 is covalently cross-linked (Glycyl lysine isopeptide (Lys-Gly) (interchain with G-Cter in SUMO2)). A Glycyl lysine isopeptide (Lys-Gly) (interchain with G-Cter in SUMO1); alternate cross-link involves residue Lys27. Residue Lys27 forms a Glycyl lysine isopeptide (Lys-Gly) (interchain with G-Cter in SUMO2); alternate linkage. Positions 52–134 constitute an SCAN box domain; sequence RQRFRQFGYQ…AVLEDLESEL (83 aa). Phosphoserine is present on residues Ser132 and Ser142. Residues Lys147, Lys177, and Lys236 each participate in a glycyl lysine isopeptide (Lys-Gly) (interchain with G-Cter in SUMO2) cross-link. Residues 251-273 form a C2H2-type 1 zinc finger; sequence HICDECGKHFSQGSALILHQRIH. Residues 251–301 are necessary and sufficient for nuclear localization; the sequence is HICDECGKHFSQGSALILHQRIHSGEKPYGCVECGKAFSRSSILVQHQRVH. Ser274 bears the Phosphoserine mark. Glycyl lysine isopeptide (Lys-Gly) (interchain with G-Cter in SUMO2) cross-links involve residues Lys277 and Lys286. 3 C2H2-type zinc fingers span residues 279 to 301, 307 to 329, and 335 to 357; these read YGCV…QRVH, YKCL…QRIH, and YECV…QRRH. At Ser292 the chain carries Phosphoserine. Tyr335 carries the post-translational modification Phosphotyrosine. Residues Lys361 and Lys367 each participate in a glycyl lysine isopeptide (Lys-Gly) (interchain with G-Cter in SUMO2) cross-link.

This sequence belongs to the krueppel C2H2-type zinc-finger protein family. Post-translationally, sumoylated. In terms of tissue distribution, widely expressed with highest levels in heart, brain, liver, skeletal muscle, kidney and testis and very low levels in spleen and lung.

The protein resides in the nucleus. Functionally, transcription factor required for myelination of differentiated oligodendrocytes. Required for the conversion of oligodendrocytes from the premyelinating to the myelinating state. In the developing central nervous system (CNS), involved in the maintenance in the progenitor stage by promoting the cell cycle. Specifically binds to the 5'-TCAT-3' DNA sequence. Has transcription repressor activity in vitro. This chain is Zinc finger protein 24, found in Mus musculus (Mouse).